A 417-amino-acid polypeptide reads, in one-letter code: MGRRRGVELYRAPFPLYALRIDPKTGLLIAAGGGGAAKTGIKNGVHFLQLELINGCLSASLLHSHDTETRATMNLALAGDILAAGQDAQCQLLRFQVHQQKGSKAEKSGSKEQGPRQRKGAPPAEKKSGAQVHPEGVELKVKNLEAVQTDFSNEPLQKVVCFNHDNTLLATGGTDGHVRVWKVPSLEKVLEFKAHEGEIGDLTLGPDGKLVTVGWDFKASVWQKDQLVTQLQWQENGPASSNTPYRYQACRFGQVPDQLGGLRLFTVQIPHKRLRQPPPCYLTAWDSSTFLPLRTRSCGHEVISCLSVSDSGTFLGLGTVTGSVAIYIAFSLQRLYYVKEAHGIVVTDVTFLPEKGCGPKLLGPHETALFSVAVDSRCQLHLLPSRRSVPVWLLLLLCVGLIIVTILLLQTAFPGFL.

Residues 1–388 lie on the Cytoplasmic side of the membrane; the sequence is MGRRRGVELY…QLHLLPSRRS (388 aa). Tyr-10 carries the post-translational modification 3'-nitrotyrosine. The tract at residues 101-135 is disordered; sequence KGSKAEKSGSKEQGPRQRKGAPPAEKKSGAQVHPE. The span at 103–115 shows a compositional bias: basic and acidic residues; it reads SKAEKSGSKEQGP. 3 WD repeats span residues 152–191, 194–232, and 298–337; these read SNEP…KVLE, AHEG…TQLQ, and CGHE…RLYY. Residues 389–409 form a helical membrane-spanning segment; sequence VPVWLLLLLCVGLIIVTILLL. Topologically, residues 410–417 are lumenal; the sequence is QTAFPGFL.

As to quaternary structure, interacts with SAR1B (GDP-bound form). Interacts with MIA2; recruits PREB to endoplasmic reticulum exit sites. Interacts with CIDEB; facilitating loading of SCAP-SREBP into COPII vesicles.

It is found in the endoplasmic reticulum membrane. The protein localises to the nucleus. Functionally, guanine nucleotide exchange factor (GEF) that regulates the assembly of the coat protein complex II/COPII in endoplasmic reticulum (ER) to Golgi vesicle-mediated transport. Selectively activates SAR1A and SAR1B by promoting the exchange of guanosine diphosphate (GDP) for guanosine triphosphate (GTP) in these small GTPases. In their activated GTP-bound state, SAR1A and SAR1B insert into the membrane of the endoplasmic reticulum where they recruit the remainder of the coat protein complex II/COPII which is responsible for both the sorting of proteins and the deformation and budding of membranes into vesicles destined to the Golgi. Its function is as follows. Was first identified based on its probable role in the regulation of pituitary gene transcription. Binds to the prolactin gene (PRL) promoter and seems to activate transcription. The sequence is that of Guanine nucleotide-exchange factor SEC12 from Mus musculus (Mouse).